Reading from the N-terminus, the 233-residue chain is ATP synthase subunit C lysine N-methyltransferase (233 aa).

Met1 is subject to N-acetylmethionine. Residues 38–58 (FLLTGLVGGTLVAVYAVATPF) traverse the membrane as a helical segment. A required for mitochondrial location region spans residues 56 to 90 (TPFVTPALRKVCLPFVPATTKQIENVVKMLRCRRG).

Belongs to the ANT/ATPSC lysine N-methyltransferase family. Ubiquitously expressed.

The protein resides in the mitochondrion membrane. The catalysed reaction is L-lysyl-[protein] + 3 S-adenosyl-L-methionine = N(6),N(6),N(6)-trimethyl-L-lysyl-[protein] + 3 S-adenosyl-L-homocysteine + 3 H(+). Its function is as follows. Mitochondrial protein-lysine N-methyltransferase that trimethylates ATP synthase subunit C, ATP5MC1 and ATP5MC2. Trimethylation is required for proper incorporation of the C subunit into the ATP synthase complex and mitochondrial respiration. Promotes chronic pain. Involved in persistent inflammatory and neuropathic pain: methyltransferase activity in the mitochondria of sensory neurons promotes chronic pain via a pathway that depends on the production of reactive oxygen species (ROS) and on the engagement of spinal cord microglia. This chain is ATP synthase subunit C lysine N-methyltransferase, found in Homo sapiens (Human).